A 157-amino-acid chain; its full sequence is Protein Smg homolog (157 aa).

It belongs to the Smg family.

In Shewanella sediminis (strain HAW-EB3), this protein is Protein Smg homolog.